The primary structure comprises 57 residues: MNVFMPIRVFLYSYVIINSLLSSFFHQYRPLFIKNGAAFGVSNSEKICVTLIVNELI.

Residues 4–26 (FMPIRVFLYSYVIINSLLSSFFH) traverse the membrane as a helical segment.

The protein localises to the membrane. This is an uncharacterized protein from Saccharomyces cerevisiae (strain ATCC 204508 / S288c) (Baker's yeast).